The primary structure comprises 54 residues: Soricidin (54 aa).

3 cysteine pairs are disulfide-bonded: Cys-2–Cys-23, Cys-6–Cys-27, and Cys-9–Cys-41.

This sequence belongs to the opioid neuropeptide precursor family. As to quaternary structure, member of a multiprotein complex. In terms of tissue distribution, salivary gland.

The protein resides in the secreted. In terms of biological role, paralytic toxin that immobilizes a mealworm for 7 days. Inhibits the transient receptor potential cation channel subfamily V member 6 (TRPV6). The polypeptide is Soricidin (Blarina brevicauda (Northern short-tailed shrew)).